A 199-amino-acid chain; its full sequence is Small ribosomal subunit protein uS4 (199 aa).

In terms of domain architecture, S4 RNA-binding spans 91–154; the sequence is SRLDNVVYRL…KDLIIVKEAL (64 aa).

Belongs to the universal ribosomal protein uS4 family. Part of the 30S ribosomal subunit. Contacts protein S5. The interaction surface between S4 and S5 is involved in control of translational fidelity.

In terms of biological role, one of the primary rRNA binding proteins, it binds directly to 16S rRNA where it nucleates assembly of the body of the 30S subunit. Its function is as follows. With S5 and S12 plays an important role in translational accuracy. This chain is Small ribosomal subunit protein uS4, found in Phytoplasma mali (strain AT).